Here is a 238-residue protein sequence, read N- to C-terminus: Orotidine 5'-phosphate decarboxylase (238 aa).

Substrate contacts are provided by residues Asp-13, Lys-35, 62–71 (DLKFHDIPNT), Thr-121, Arg-182, Gln-191, Gly-211, and Arg-212. Lys-64 acts as the Proton donor in catalysis.

This sequence belongs to the OMP decarboxylase family. Type 1 subfamily. As to quaternary structure, homodimer.

The catalysed reaction is orotidine 5'-phosphate + H(+) = UMP + CO2. It participates in pyrimidine metabolism; UMP biosynthesis via de novo pathway; UMP from orotate: step 2/2. Its function is as follows. Catalyzes the decarboxylation of orotidine 5'-monophosphate (OMP) to uridine 5'-monophosphate (UMP). In Saccharophagus degradans (strain 2-40 / ATCC 43961 / DSM 17024), this protein is Orotidine 5'-phosphate decarboxylase.